Here is a 678-residue protein sequence, read N- to C-terminus: uncharacterized protein (678 aa).

2 helical membrane passes run leucine 14 to leucine 34 and glycine 180 to phenylalanine 200.

This sequence belongs to the mycobacterial PPE family.

Its subcellular location is the cell membrane. This is an uncharacterized protein from Mycobacterium tuberculosis (strain CDC 1551 / Oshkosh).